Reading from the N-terminus, the 350-residue chain is Neutral protease 2 homolog SNOG_10522 (350 aa).

The signal sequence occupies residues Met-1–Ala-18. Residues Ala-19–Ile-180 constitute a propeptide that is removed on maturation. Disulfide bonds link Cys-184-Cys-251 and Cys-258-Cys-276. His-301 contributes to the Zn(2+) binding site. Glu-302 is a catalytic residue. Zn(2+) is bound by residues His-305 and Asp-316.

This sequence belongs to the peptidase M35 family. It depends on Zn(2+) as a cofactor.

Its subcellular location is the secreted. It carries out the reaction Preferential cleavage of bonds with hydrophobic residues in P1'. Also 3-Asn-|-Gln-4 and 8-Gly-|-Ser-9 bonds in insulin B chain.. Its function is as follows. Secreted metalloproteinase that allows assimilation of proteinaceous substrates. Shows high activities on basic nuclear substrates such as histone and protamine. In Phaeosphaeria nodorum (strain SN15 / ATCC MYA-4574 / FGSC 10173) (Glume blotch fungus), this protein is Neutral protease 2 homolog SNOG_10522.